The chain runs to 257 residues: Baramicin A1 (257 aa).

The N-terminal stretch at 1 to 19 (MKSFGLIALAICGVICVAA) is a signal peptide. Residues 20–21 (EP) constitute a propeptide that is removed on maturation. At Gln-22 the chain carries Pyrrolidone carboxylic acid. Residues 95-122 (GPNFSAKNLGPNGAKSVGIPQRARRSPQ) are disordered. Asn-97 carries N-linked (GlcNAc...) asparagine glycosylation. Residues 118–121 (RRSP) constitute a propeptide that is removed on maturation. Gln-122 is subject to Pyrrolidone carboxylic acid. Residues 145–148 (RRSP) constitute a propeptide that is removed on maturation. The residue at position 149 (Gln-149) is a Pyrrolidone carboxylic acid. Positions 172–175 (RRSP) are excised as a propeptide. Gln-176 is modified (pyrrolidone carboxylic acid). Residues 199–204 (RRGIND) constitute a propeptide that is removed on maturation. Asn-225 is a glycosylation site (N-linked (GlcNAc...) asparagine).

In terms of processing, proteolytically cleaved. Hemolymph (at protein level).

It is found in the secreted. Its function is as follows. Secreted immune-induced peptides induced by Toll signaling. Has a significant role in resistance to infection by the entomopathogenic fungus B.bassiana R444 and weak antifungal activity against M.rileyi PHP1705. In adult males, activity appears to be important for neuromuscular processes that mediate correct wing posture upon Toll activation. In Drosophila melanogaster (Fruit fly), this protein is Baramicin A1.